The following is a 315-amino-acid chain: DNA-directed RNA polymerase subunit alpha (315 aa).

The tract at residues 1 to 228 is alpha N-terminal domain (alpha-NTD); the sequence is MIEIEKPKVD…EHLNLFIDLT (228 aa). Residues 245 to 315 are alpha C-terminal domain (alpha-CTD); sequence KEKVLEMTIE…LGLGLKPSEE (71 aa).

This sequence belongs to the RNA polymerase alpha chain family. As to quaternary structure, homodimer. The RNAP catalytic core consists of 2 alpha, 1 beta, 1 beta' and 1 omega subunit. When a sigma factor is associated with the core the holoenzyme is formed, which can initiate transcription.

The enzyme catalyses RNA(n) + a ribonucleoside 5'-triphosphate = RNA(n+1) + diphosphate. Its function is as follows. DNA-dependent RNA polymerase catalyzes the transcription of DNA into RNA using the four ribonucleoside triphosphates as substrates. This chain is DNA-directed RNA polymerase subunit alpha, found in Clostridioides difficile (strain 630) (Peptoclostridium difficile).